Consider the following 99-residue polypeptide: U1-theraphotoxin-Tal1a (99 aa).

Residues 1 to 22 (MNTIQVIIFAVVLVLTVTVGQA) form the signal peptide. The propeptide occupies 23-57 (DEDSAETSLLRKLKEAEASLFGQHLEESQHSREKR). Disulfide bonds link Cys58-Cys73, Cys65-Cys78, and Cys72-Cys93. Ser98 bears the Serine amide mark.

The protein belongs to the neurotoxin 14 (magi-1) family. 08 (Ltx-4) subfamily. As to expression, expressed by the venom gland.

It is found in the secreted. Functionally, insecticidal toxin that shows strong lethal effects on American cockroaches (P.americana) and common mealbeetle (T.molitor). Possibly acts by blocking ion channel currents. Also shows significant analgesic effects in mice models of pain including abdominal writhing induced by acetic acid and formalin-induced paw licking tests. In addition, exerts marked inhibition of proliferation of some human tumor cell lines including C8166, Molt-4, A-549, BIU-87, T24, and Calu-6. The protein is U1-theraphotoxin-Tal1a of Tliltocatl albopilosus (Curlyhair tarantula).